A 670-amino-acid chain; its full sequence is Solute carrier organic anion transporter family member 1A5 (670 aa).

Over 1–20 (MGETEKRIATHGVRCFSKIK) the chain is Cytoplasmic. A helical transmembrane segment spans residues 21 to 40 (MFLLALTCAYVSKSLSGIYM). Over 41–59 (NSMLTQIERQFDIPTSIVG) the chain is Extracellular. The chain crosses the membrane as a helical span at residues 60-80 (LINGSFEIGNLLLIILVSYFG). The Cytoplasmic segment spans residues 81–86 (TKLHRP). The helical transmembrane segment at 87-111 (IMIGIGCVIMGLGCFLMSLPHFLMG) threads the bilayer. The Extracellular segment spans residues 112-155 (RYEYETTISPTSNLSSNSFLCMENRTQTLKPTQDPAECVKEMKS). 2 N-linked (GlcNAc...) asparagine glycosylation sites follow: asparagine 124 and asparagine 135. A helical transmembrane segment spans residues 156-184 (LMWIYVLVGNIIRGIGETPIMPLGISYIE). Residues 185 to 203 (DFAKSENSPLYIGILESGK) lie on the Cytoplasmic side of the membrane. A helical membrane pass occupies residues 204-224 (MIGPIVGLLLGSFCARIYVDT). At 225 to 242 (GSVNTDDLTITPTDTRWV) the chain is on the extracellular side. A helical membrane pass occupies residues 243-267 (GAWWIGFLVCAGVNILTSIPFFFFP). The Cytoplasmic segment spans residues 268 to 311 (KTLPKEGLQDNVARTENDKEEKHREKAKEENRGITKDFLPFMKS). Residues 312–333 (LSCNPIYMLLILTSVLQINAFI) form a helical membrane-spanning segment. Residues 334-353 (NMFTFLPKYLEQQYGKSTSE) are Extracellular-facing. Residues 354–377 (VVLLIGVCNLPPICIGYLLIGFIM) traverse the membrane as a helical segment. At 378 to 381 (KKFR) the chain is on the cytoplasmic side. A helical membrane pass occupies residues 382–405 (ITVKKAAYMAFCLSLFEYLLSYFH). The Extracellular portion of the chain corresponds to 406 to 513 (FMISCDNFQV…PECANKLQYF (108 aa)). In terms of domain architecture, Kazal-like spans 433 to 488 (NKVLADCNTRCSCLTNTWDPVCGDNGLSYMSACLAGCEKSVGMGTHMVFQNCSCIQ). 3 disulfides stabilise this stretch: cysteine 439–cysteine 469, cysteine 445–cysteine 465, and cysteine 454–cysteine 486. Asparagine 483 and asparagine 492 each carry an N-linked (GlcNAc...) asparagine glycan. Residues 514-536 (LIMSVIGSFIYSITAIPGYMVLL) traverse the membrane as a helical segment. At 537 to 545 (RCIKSEEKS) the chain is on the cytoplasmic side. Residues 546-571 (LGIGLHAFCTRIFAGIPAPIYFGALI) form a helical membrane-spanning segment. Residues 572-605 (DRTCLHWGTLKCGEPGACRIYNINNFRRIYLVLP) lie on the Extracellular side of the membrane. A helical transmembrane segment spans residues 606–623 (AALRGSSYLPAFFILILM). The Cytoplasmic portion of the chain corresponds to 624–670 (RKFQLPGEMYSSETELADMKQTVKKSECTDVHGIPKVENDGELKTKL).

It belongs to the organo anion transporter (TC 2.A.60) family. In terms of tissue distribution, expressed in brain, choroid plexus and lung, but not in liver or kidney.

The protein resides in the cell membrane. The protein localises to the basal cell membrane. The enzyme catalyses taurocholate(out) = taurocholate(in). It catalyses the reaction glycocholate(out) = glycocholate(in). The catalysed reaction is taurochenodeoxycholate(out) = taurochenodeoxycholate(in). It carries out the reaction tauroursodeoxycholate(out) = tauroursodeoxycholate(in). The enzyme catalyses 3,3',5'-triiodo-L-thyronine(out) = 3,3',5'-triiodo-L-thyronine(in). It catalyses the reaction L-thyroxine(out) = L-thyroxine(in). The catalysed reaction is taurodeoxycholate(out) = taurodeoxycholate(in). It carries out the reaction glycodeoxycholate(out) = glycodeoxycholate(in). The enzyme catalyses glycochenodeoxycholate(out) = glycochenodeoxycholate(in). It catalyses the reaction glycoursodeoxycholate(out) = glycoursodeoxycholate(in). The catalysed reaction is estrone 3-sulfate(out) = estrone 3-sulfate(in). It carries out the reaction prostaglandin E2(out) = prostaglandin E2(in). The enzyme catalyses substance P(out) = substance P(in). Its function is as follows. Na(+)-independent transporter that mediates the cellular uptake of a broad range of organic anions such as the endogenous bile salts cholate and deoxycholate, either in their unconjugated or conjugated forms (taurocholate and glycocholate), estrone 3-sulfate and prostaglandin E2, at the plasma membrane. Responsible for intestinal absorption of bile acids. Capable of thyroid hormone transport (both T3 or 3,3',5'-triiodo-L-thyronine, and T4 or L-tyroxine). Plays roles in blood-brain and -cerebrospinal fluid barrier transport of organic anions and signal mediators, and in hormone uptake by neural cells. May also play a role in the reuptake of neuropeptides such as substance P/TAC1 and vasoactive intestinal peptide/VIP released from retinal neurons. Shows a pH-sensitive substrate specificity which may be ascribed to the protonation state of the binding site and leads to a stimulation of substrate transport in an acidic microenvironment. Hydrogencarbonate/HCO3(-) acts as the probable counteranion that exchanges for organic anions. May contribute to regulate the transport of organic compounds in testis across the blood-testis-barrier. The sequence is that of Solute carrier organic anion transporter family member 1A5 (Slco1a5) from Mus musculus (Mouse).